The sequence spans 491 residues: Glutamyl-tRNA(Gln) amidotransferase subunit A (491 aa).

Active-site charge relay system residues include Lys78 and Ser158. The active-site Acyl-ester intermediate is the Ser182.

It belongs to the amidase family. GatA subfamily. Heterotrimer of A, B and C subunits.

It carries out the reaction L-glutamyl-tRNA(Gln) + L-glutamine + ATP + H2O = L-glutaminyl-tRNA(Gln) + L-glutamate + ADP + phosphate + H(+). In terms of biological role, allows the formation of correctly charged Gln-tRNA(Gln) through the transamidation of misacylated Glu-tRNA(Gln) in organisms which lack glutaminyl-tRNA synthetase. The reaction takes place in the presence of glutamine and ATP through an activated gamma-phospho-Glu-tRNA(Gln). This chain is Glutamyl-tRNA(Gln) amidotransferase subunit A, found in Nitrobacter winogradskyi (strain ATCC 25391 / DSM 10237 / CIP 104748 / NCIMB 11846 / Nb-255).